The primary structure comprises 1486 residues: Phosphatidylinositol 3-kinase C2 domain-containing subunit gamma (1486 aa).

A PI3K-RBD domain is found at Lys285–Glu371. In terms of domain architecture, C2 PI3K-type spans Leu521–Pro669. The 177-residue stretch at Arg684 to Cys860 folds into the PIK helical domain. One can recognise a PI3K/PI4K catalytic domain in the interval Asp929–Pro1207. Residues Tyr935 to Leu941 form a G-loop region. Positions Gly1071–Asn1079 are catalytic loop. Positions His1090–Thr1116 are activation loop. A PX domain is found at Leu1240 to Gln1352. Residues Lys1369–Ile1486 form the C2 domain.

This sequence belongs to the PI3/PI4-kinase family. In terms of tissue distribution, highly expressed in liver, prostate and testis. Lower levels in small intestine, kidney and pancreas.

The protein resides in the membrane. It catalyses the reaction a 1,2-diacyl-sn-glycero-3-phospho-(1D-myo-inositol 4-phosphate) + ATP = a 1,2-diacyl-sn-glycero-3-phospho-(1D-myo-inositol-3,4-bisphosphate) + ADP + H(+). The catalysed reaction is a 1,2-diacyl-sn-glycero-3-phospho-(1D-myo-inositol) + ATP = a 1,2-diacyl-sn-glycero-3-phospho-(1D-myo-inositol-3-phosphate) + ADP + H(+). Its function is as follows. Generates phosphatidylinositol 3-phosphate (PtdIns3P) and phosphatidylinositol 3,4-bisphosphate (PtdIns(3,4)P2) that act as second messengers. May play a role in SDF1A-stimulated chemotaxis. The protein is Phosphatidylinositol 3-kinase C2 domain-containing subunit gamma (PIK3C2G) of Homo sapiens (Human).